Here is a 156-residue protein sequence, read N- to C-terminus: Endoribonuclease YbeY (156 aa).

Positions 122, 126, and 132 each coordinate Zn(2+).

The protein belongs to the endoribonuclease YbeY family. Zn(2+) serves as cofactor.

It is found in the cytoplasm. Single strand-specific metallo-endoribonuclease involved in late-stage 70S ribosome quality control and in maturation of the 3' terminus of the 16S rRNA. This Bacillus cereus (strain ATCC 10987 / NRS 248) protein is Endoribonuclease YbeY.